A 514-amino-acid polypeptide reads, in one-letter code: MDSKPLEYLLGLNSDGSVKKVSEVFENLTVTNTVCAFIALFIIVPRVFDFLRNLFSPVISIPGPLINKFSPWPLEIATFKGKSHRFARALHRKYGPIVVLAPGMISIGDSQEIKRIIQSEDWAKSEAIYGNFRQDFHRPTLLAFTEKKAYSRRKRMLSSMFGIRYIRSLEPLMKSCVDAGVAHLNKLCDNPSKSTVINLQHFIHGLAIDTIGVTTFGGSFHVVENGSHPLPSRLKAGMKISAVMQLIGWIKYIPFLPKRDPYIEKFTFDIVDKRRKEAGAVKYQDLLQHLVDVCDDSPGSEFRTSDVQDESVILLAAGSETTANAELFTVIQLLKHPEVMKKLIAEVDKWYPPSEPDRVTECAYSQTGMTYLQACIDETMRLIPGQATGSPRETSKQESLLGYKIPRGTTVFPNTQEAHLDGSIWEQPEKYIPERWLEIYSQNQTSAMPYWPFSAGSRICVGKNFAFQEMHISLTTLLRKFTFEYVPGQDETTVFRIAQQLETDSYKVRVKKRF.

A helical transmembrane segment spans residues 24–44; that stretch reads VFENLTVTNTVCAFIALFIIV. N-linked (GlcNAc...) asparagine glycosylation is found at Asn225 and Asn443. A heme-binding site is contributed by Cys460.

Belongs to the cytochrome P450 family. Heme serves as cofactor.

The protein localises to the membrane. It participates in mycotoxin biosynthesis. Its function is as follows. Cytochrome P450 monooxygenase; part of the gene cluster that mediates the biosynthesis of the mycotoxin fusarin C. Within the cluster, FUS1, FUS2, FUS8 and FUS9 are sufficient for fusarin production. The roles of the other FUS members are yet undetermined. The fusarin C synthetase FUS1 is responsible for the condensation of one acetyl-coenzyme A (CoA) unit with six malonyl-CoA units and the amide linkage of the arising heptaketide and homoserine, subsequently releasing the first intermediate, prefusarin, as an alcohol with an open ring structure. The cytochrome P450 monooxygenase FUS8 participates in multiple oxidation processes at carbon C-20 and is able to use the FUS1 product as substrate, resulting in formation of 20-hydroxy-prefusarin. This reaction seems to be essential before the 2-pyrrolidone ring closure can be catalyzed by FUS2, generating 20-hydroxy-fusarin. FUS8 is able to further oxidizes carbon C-20 after ring closure, resulting in the formation of carboxy-fusarin C. As the last step, FUS9 methylates the hydroxyl group at C-21 to generate fusarin C. Fusarin C can then rearrange to epi-fusarin C, the (z)-isomers, and fusarin A and fusarin D. The protein is Cytochrome P450 monooxygenase FUS8 of Gibberella fujikuroi (strain CBS 195.34 / IMI 58289 / NRRL A-6831) (Bakanae and foot rot disease fungus).